Here is a 513-residue protein sequence, read N- to C-terminus: ATP synthase subunit alpha (513 aa).

Gly169 to Thr176 is a binding site for ATP.

It belongs to the ATPase alpha/beta chains family. As to quaternary structure, F-type ATPases have 2 components, CF(1) - the catalytic core - and CF(0) - the membrane proton channel. CF(1) has five subunits: alpha(3), beta(3), gamma(1), delta(1), epsilon(1). CF(0) has three main subunits: a(1), b(2) and c(9-12). The alpha and beta chains form an alternating ring which encloses part of the gamma chain. CF(1) is attached to CF(0) by a central stalk formed by the gamma and epsilon chains, while a peripheral stalk is formed by the delta and b chains.

The protein resides in the cell inner membrane. The enzyme catalyses ATP + H2O + 4 H(+)(in) = ADP + phosphate + 5 H(+)(out). Produces ATP from ADP in the presence of a proton gradient across the membrane. The alpha chain is a regulatory subunit. The sequence is that of ATP synthase subunit alpha from Francisella tularensis subsp. tularensis (strain WY96-3418).